The following is a 130-amino-acid chain: uncharacterized protein (130 aa).

Polar residues-rich tracts occupy residues 1-27 (MEILNQFSQFSPNMEAQGASSIPQPSQ) and 36-46 (QAENQETAKNG). Disordered regions lie at residues 1–46 (MEIL…AKNG) and 103–130 (VSAQTQKATSVKFDRRRNELDSDEELDL). Residues 27-51 (QDAHEKARQQAENQETAKNGMISQI) adopt a coiled-coil conformation.

Belongs to the PDCD5 family.

This is an uncharacterized protein from Caenorhabditis elegans.